The sequence spans 209 residues: Uracil phosphoribosyltransferase (209 aa).

5-phospho-alpha-D-ribose 1-diphosphate contacts are provided by residues arginine 79, arginine 104, and 131–139 (DPMLATGGS). Uracil contacts are provided by residues isoleucine 194 and 199–201 (GDA). 5-phospho-alpha-D-ribose 1-diphosphate is bound at residue aspartate 200.

The protein belongs to the UPRTase family. Requires Mg(2+) as cofactor.

It carries out the reaction UMP + diphosphate = 5-phospho-alpha-D-ribose 1-diphosphate + uracil. It functions in the pathway pyrimidine metabolism; UMP biosynthesis via salvage pathway; UMP from uracil: step 1/1. Allosterically activated by GTP. Functionally, catalyzes the conversion of uracil and 5-phospho-alpha-D-ribose 1-diphosphate (PRPP) to UMP and diphosphate. This chain is Uracil phosphoribosyltransferase, found in Streptococcus agalactiae serotype III (strain NEM316).